Consider the following 176-residue polypeptide: ATP-dependent protease subunit HslV (176 aa).

The active site involves threonine 2. Glycine 157, cysteine 160, and threonine 163 together coordinate Na(+).

This sequence belongs to the peptidase T1B family. HslV subfamily. A double ring-shaped homohexamer of HslV is capped on each side by a ring-shaped HslU homohexamer. The assembly of the HslU/HslV complex is dependent on binding of ATP.

The protein localises to the cytoplasm. It catalyses the reaction ATP-dependent cleavage of peptide bonds with broad specificity.. Its activity is regulated as follows. Allosterically activated by HslU binding. Protease subunit of a proteasome-like degradation complex believed to be a general protein degrading machinery. This chain is ATP-dependent protease subunit HslV, found in Pectobacterium carotovorum subsp. carotovorum (strain PC1).